Reading from the N-terminus, the 451-residue chain is Tetraspanin-14 (451 aa).

Over 1-56 (MPHRAPRRFMKTAPGACDWEQCLLMGSGEPTRARAVVSSSHKQRKPRQEISACLKW) the chain is Cytoplasmic. Positions 20–24 (EQCLL) match the Basolateral membrane targeting motif. Residues 57–77 (LVFLLNSIVFLVGVGILALGV) traverse the membrane as a helical segment. Over 78–96 (YLFIKDFREVKLVDIILNP) the chain is Extracellular. Residues 97 to 117 (AILISIFGFSICVVSFFGFMG) traverse the membrane as a helical segment. Residues 118-130 (ALRDNIFLLKCFA) lie on the Cytoplasmic side of the membrane. The helical transmembrane segment at 131–151 (ACVFLSYILVVAVTLVFFTLF) threads the bilayer. At 152–285 (YTDTTEGLSA…QPLRTLFESH (134 aa)) the chain is on the extracellular side. Asparagine 205 and asparagine 211 each carry an N-linked (GlcNAc...) asparagine glycan. Residues 286-306 (AVHVGAFVALLIVPVCISVCL) form a helical membrane-spanning segment. The Cytoplasmic portion of the chain corresponds to 307-451 (TNILAKQVDH…TDLVPQKSKS (145 aa)). The disordered stretch occupies residues 328–451 (NDRRRKRDHN…TDLVPQKSKS (124 aa)). Positions 366–376 (PDIPPPLPPIE) are enriched in pro residues. Residues 410-434 (ATTTRTPPAAAGPAPTPQATTTNRT) show a composition bias toward low complexity. Polar residues predominate over residues 435–444 (HQWVLQQTDL).

The protein belongs to the tetraspanin (TM4SF) family. In terms of tissue distribution, expressed in the germline, particularly in sperm cells. As to expression, expressed in the germline (particularly in sperm cells), anterior sensory cilia, hypodermis and vulva (at protein level). Expressed in the pharynx, hypodermis and vulva (at protein level).

The protein resides in the cell membrane. It localises to the cytoplasmic vesicle membrane. Its subcellular location is the endosome membrane. The protein localises to the early endosome membrane. It is found in the late endosome membrane. The protein resides in the recycling endosome membrane. It localises to the apical cell membrane. Its subcellular location is the basolateral cell membrane. Functionally, functions redundantly with tsp-12 to regulate cell surface levels of the BMP type II receptor daf-4 (but not BMP type I receptor sma-6), probably by regulating endosomal sorting and recycling of receptors, preventing their targeting to degradative lysosomes. Together with tsp-12, regulates cell fate specification in the postembryonic mesodermal M lineage, body size, male development and vulva development, probably by positively modulating BMP-like Sma/Mab signaling. Together with tsp-12 involved in maintaining the structural and functional integrity of the endosomal network. Together with tsp-12, probably acts by modulating the activation of glp-1, Notch-like receptor, to regulate germline maturation. Its function is as follows. Functions redundantly with tsp-12 to regulate cell fate specification in the postembryonic mesodermal M lineage, body size, embryonic and vulva development. Functions redundantly with tsp-12 to regulate cell fate specification in the postembryonic mesodermal M lineage. Likely plays a complementary role in mesodermal development with tsp-14 isoform a, but may be more critical. The protein is Tetraspanin-14 of Caenorhabditis elegans.